Here is a 730-residue protein sequence, read N- to C-terminus: Elongation factor 2 (730 aa).

The tr-type G domain occupies Asp-18 to Val-238. Residues Ala-27 to Thr-34, Asp-93 to His-97, and Asn-147 to Asp-150 contribute to the GTP site. His-595 is subject to Diphthamide. Residues Arg-711–Glu-730 are disordered.

Belongs to the TRAFAC class translation factor GTPase superfamily. Classic translation factor GTPase family. EF-G/EF-2 subfamily.

Its subcellular location is the cytoplasm. Its function is as follows. Catalyzes the GTP-dependent ribosomal translocation step during translation elongation. During this step, the ribosome changes from the pre-translocational (PRE) to the post-translocational (POST) state as the newly formed A-site-bound peptidyl-tRNA and P-site-bound deacylated tRNA move to the P and E sites, respectively. Catalyzes the coordinated movement of the two tRNA molecules, the mRNA and conformational changes in the ribosome. In Cenarchaeum symbiosum (strain A), this protein is Elongation factor 2.